Consider the following 343-residue polypeptide: ELAV-like protein 3 (343 aa).

RRM domains follow at residues Thr35 to Pro113, Ala121 to Asn202, and Trp260 to Ser338.

It belongs to the RRM elav family.

In terms of biological role, RNA-binding protein that binds to AU-rich sequences (AREs) of target mRNAs. May also bind poly-A tracts via RRM 3. May be involved in neuronal differentiation and maintenance. The sequence is that of ELAV-like protein 3 from Xenopus tropicalis (Western clawed frog).